We begin with the raw amino-acid sequence, 423 residues long: CinA-like protein (423 aa).

This sequence belongs to the CinA family.

This is CinA-like protein from Chlorobium chlorochromatii (strain CaD3).